A 227-amino-acid chain; its full sequence is UPF0758 protein LPC_1989 (227 aa).

Positions 102–225 constitute an MPN domain; the sequence is QLSNTQQTYA…YSIFAENKWV (124 aa). The Zn(2+) site is built by histidine 173, histidine 175, and aspartate 186. A JAMM motif motif is present at residues 173–186; the sequence is HNHPSGLSDASQQD.

It belongs to the UPF0758 family.

The chain is UPF0758 protein LPC_1989 from Legionella pneumophila (strain Corby).